The chain runs to 77 residues: Phytosulfokines 5 (77 aa).

A signal peptide spans 1 to 24; sequence MVKFTTFLCIIALLLCSTLTHASA. Residues 25-68 constitute a propeptide that is removed on maturation; it reads RLNPTSVYPEENSFKKLEQGEVICEGVGEEECFLIRRTLVAHTD. Sulfotyrosine occurs at positions 69 and 71. Residues 74-77 constitute a propeptide that is removed on maturation; sequence NHNP.

Belongs to the phytosulfokine family. Post-translationally, sulfation is important for activity and for the binding to a putative membrane receptor. PSK-beta is an enzymatic derivative of PSK-alpha. In terms of tissue distribution, expressed in stems, roots, mature leaves and flowers. Most abundant in vascular bundles.

It localises to the secreted. In terms of biological role, promotes plant cell differentiation, organogenesis and somatic embryogenesis as well as cell proliferation. May be involved in the low quiescent center cell proliferation. In Arabidopsis thaliana (Mouse-ear cress), this protein is Phytosulfokines 5 (PSK5).